We begin with the raw amino-acid sequence, 585 residues long: Mitochondrial sodium/calcium exchanger protein (585 aa).

Positions 1–26 (MASRWLALLWAPVFLCVALILETASG) are cleaved as a signal peptide. The Extracellular portion of the chain corresponds to 27–95 (TGDPSTKAHG…GIFCYFPPNL (69 aa)). The N-linked (GlcNAc...) asparagine glycan is linked to N46. A helical membrane pass occupies residues 96 to 116 (LPLAITLYVFWLLYLFLILGV). Topologically, residues 117–140 (TAAKFFCPNLSAISTNLKLSHNVA) are cytoplasmic. Residues 141–161 (GVTFLAFGNGAPDIFSALVAF) traverse the membrane as a helical segment. Residues 162–168 (SDPRTAG) are Extracellular-facing. A helical transmembrane segment spans residues 169–189 (LAIGALFGAGVLVTTVVAGGI). Over 190–205 (TILHPFMAASRPFLRD) the chain is Cytoplasmic. The helical transmembrane segment at 206-226 (IAFYMVAVFLTFTALYLGRIT) threads the bilayer. Residues 227–229 (LTW) lie on the Extracellular side of the membrane. A helical transmembrane segment spans residues 230–250 (ALGYLGLYVFYVVTVIICTWV). Residues 251–325 (YQRQRSRSLV…KWRTQSISWR (75 aa)) are Cytoplasmic-facing. S258 is subject to Phosphoserine; by PKA. Residues 326–346 (VLKVVKLPVEFLLLLTVPVVD) traverse the membrane as a helical segment. Residues 347–360 (PDKDDRNWKRPLNC) lie on the Extracellular side of the membrane. The chain crosses the membrane as a helical span at residues 361 to 381 (LQLVISPLVLVLTLQSGVYGI). Residues 382–383 (YE) are Cytoplasmic-facing. The chain crosses the membrane as a helical span at residues 384–404 (IGGLLPVWAVVVIVGTALASV). At 405-416 (TFFATSNREPPR) the chain is on the extracellular side. A helical membrane pass occupies residues 417 to 437 (LHWLFAFLGFLTSALWINAAA). The Cytoplasmic portion of the chain corresponds to 438 to 445 (TEVVNILR). The chain crosses the membrane as a helical span at residues 446-466 (SLGVIFRLSNTVLGLTLLAWG). Residues 467–491 (NSIGDAFSDFTLARQGYPRMAFSAC) are Extracellular-facing. A helical transmembrane segment spans residues 492–512 (FGGIIFNILVGVGLGCLLQII). The Cytoplasmic segment spans residues 513–525 (RNHVVEVKLEPDG). Residues 526 to 546 (LLVWVLASALGLSLIFSLVSV) traverse the membrane as a helical segment. The Extracellular segment spans residues 547-559 (PLQCFQLSKAYGL). The helical transmembrane segment at 560–580 (CLLLFYICFLVVVLLTEFGVI) threads the bilayer. The Cytoplasmic portion of the chain corresponds to 581 to 585 (HLKKA).

It belongs to the Ca(2+):cation antiporter (CaCA) (TC 2.A.19) family. SLC24A subfamily. In terms of processing, phosphorylation at Ser-258 by PKA prevents calcium overload. In terms of tissue distribution, ubiquitously expressed. Expressed in dental tissues.

It localises to the mitochondrion inner membrane. The protein localises to the cell membrane. The enzyme catalyses Ca(2+)(in) + 3 Na(+)(out) = Ca(2+)(out) + 3 Na(+)(in). The catalysed reaction is 3 Li(+)(out) + Ca(2+)(in) = 3 Li(+)(in) + Ca(2+)(out). With respect to regulation, inhibited by the sodium/calcium exchanger inhibitor CGP-37157. Strongly inhibited by zinc. Its function is as follows. Mitochondrial sodium/calcium antiporter that mediates sodium-dependent calcium efflux from mitochondrion, by mediating the exchange of 3 sodium ions per 1 calcium ion. Plays a central role in mitochondrial calcium homeostasis by mediating mitochondrial calcium extrusion: calcium efflux is essential for mitochondrial function and cell survival, notably in cardiomyocytes. Regulates rates of glucose-dependent insulin secretion in pancreatic beta-cells during the first phase of insulin secretion: acts by mediating efflux of calcium from mitochondrion, thereby affecting cytoplasmic calcium responses. Required for store-operated Ca(2+) entry (SOCE) and Ca(2+) release-activated Ca(2+) (CRAC) channel regulation: sodium transport by SLC8B1 leads to promote calcium-shuttling that modulates mitochondrial redox status, thereby regulating SOCE activity. Involved in B-lymphocyte chemotaxis. Able to transport Ca(2+) in exchange of either Li(+) or Na(+), explaining how Li(+) catalyzes Ca(2+) exchange. In contrast to other members of the family its function is independent of K(+). This chain is Mitochondrial sodium/calcium exchanger protein, found in Mus musculus (Mouse).